A 559-amino-acid chain; its full sequence is Sporulation protein kinase mde3 (559 aa).

Positions 21-323 (YLVKQKLGDG…TAKYCKEVFF (303 aa)) constitute a Protein kinase domain. ATP is bound by residues 27-35 (LGDGSFGTV) and Lys-53. The Proton acceptor role is filled by Asp-150.

It belongs to the protein kinase superfamily. Ser/Thr protein kinase family.

The enzyme catalyses L-seryl-[protein] + ATP = O-phospho-L-seryl-[protein] + ADP + H(+). The catalysed reaction is L-threonyl-[protein] + ATP = O-phospho-L-threonyl-[protein] + ADP + H(+). Functionally, protein kinase which is essential for spore formation. The polypeptide is Sporulation protein kinase mde3 (mde3) (Schizosaccharomyces pombe (strain 972 / ATCC 24843) (Fission yeast)).